The sequence spans 271 residues: Tryptophan synthase alpha chain (271 aa).

Active-site proton acceptor residues include E51 and D62.

Belongs to the TrpA family. As to quaternary structure, tetramer of two alpha and two beta chains.

The catalysed reaction is (1S,2R)-1-C-(indol-3-yl)glycerol 3-phosphate + L-serine = D-glyceraldehyde 3-phosphate + L-tryptophan + H2O. Its pathway is amino-acid biosynthesis; L-tryptophan biosynthesis; L-tryptophan from chorismate: step 5/5. Functionally, the alpha subunit is responsible for the aldol cleavage of indoleglycerol phosphate to indole and glyceraldehyde 3-phosphate. This Prochlorococcus marinus (strain NATL2A) protein is Tryptophan synthase alpha chain.